We begin with the raw amino-acid sequence, 287 residues long: 4-hydroxybenzoate octaprenyltransferase (287 aa).

9 helical membrane passes run 7-27 (FISYGYLIRLDKPIGTLLLLW), 30-50 (LWALWLASSGVLDLSILLIFV), 94-114 (VAVASFLALCAFLLIQPLNAF), 118-138 (LSVLALLVAFIYPFTKRFFAM), 142-162 (VLGIAFGFGIPMAYAAILDFI), 167-187 (WFLFTGNIFWAIAYDTAYAMV), 209-229 (VVVIAISYGMLFLSHLWVAQL), 235-255 (YFLVGWFAALACAIYHLKLVS), and 266-286 (FRHNNWLGGFLFLGIVLGLGV).

Belongs to the UbiA prenyltransferase family. Mg(2+) serves as cofactor.

It is found in the cell inner membrane. It catalyses the reaction all-trans-octaprenyl diphosphate + 4-hydroxybenzoate = 4-hydroxy-3-(all-trans-octaprenyl)benzoate + diphosphate. Its pathway is cofactor biosynthesis; ubiquinone biosynthesis. Its function is as follows. Catalyzes the prenylation of para-hydroxybenzoate (PHB) with an all-trans polyprenyl group. Mediates the second step in the final reaction sequence of ubiquinone-8 (UQ-8) biosynthesis, which is the condensation of the polyisoprenoid side chain with PHB, generating the first membrane-bound Q intermediate 3-octaprenyl-4-hydroxybenzoate. In Polynucleobacter necessarius subsp. necessarius (strain STIR1), this protein is 4-hydroxybenzoate octaprenyltransferase.